Consider the following 130-residue polypeptide: uncharacterized protein (130 aa).

A helical transmembrane segment spans residues 8 to 28 (PFILMIIVLGLFLVSIGGYYY).

Its subcellular location is the membrane. This is an uncharacterized protein from Bacillus anthracis.